A 144-amino-acid chain; its full sequence is Granulocyte-macrophage colony-stimulating factor (144 aa).

The first 17 residues, Met1 to Ser17, serve as a signal peptide directing secretion. 2 O-linked (GalNAc...) serine glycosylation sites follow: Ser22 and Ser24. Thr27 is a glycosylation site (O-linked (GalNAc...) threonine). N-linked (GlcNAc...) asparagine glycosylation is found at Asn44, Asn45, and Asn54. 2 disulfides stabilise this stretch: Cys71/Cys113 and Cys105/Cys138.

The protein belongs to the GM-CSF family. As to quaternary structure, monomer. The signaling GM-CSF receptor complex is a dodecamer of two head-to-head hexamers of two alpha, two beta, and two ligand subunits.

It localises to the secreted. Cytokine that stimulates the growth and differentiation of hematopoietic precursor cells from various lineages, including granulocytes, macrophages, eosinophils and erythrocytes. The sequence is that of Granulocyte-macrophage colony-stimulating factor (CSF2) from Felis catus (Cat).